The following is a 447-amino-acid chain: C4-dicarboxylate transport protein 3 (447 aa).

The next 8 membrane-spanning stretches (helical) occupy residues Thr5 to Ala27, Ile42 to Met64, Ala77 to Val99, Leu146 to Leu165, Val186 to Thr208, Leu223 to Leu245, Ile315 to Leu337, and Phe352 to Leu374.

Belongs to the dicarboxylate/amino acid:cation symporter (DAACS) (TC 2.A.23) family.

It localises to the cell inner membrane. Responsible for the transport of dicarboxylates such as succinate, fumarate, and malate from the periplasm across the membrane. The polypeptide is C4-dicarboxylate transport protein 3 (dctA3) (Ralstonia nicotianae (strain ATCC BAA-1114 / GMI1000) (Ralstonia solanacearum)).